Reading from the N-terminus, the 506-residue chain is Zinc finger protein MAGPIE (506 aa).

Residues 1-53 form a disordered region; that stretch reads MTTEDQTISSSGGYVQSSSTTDHVDHHHHDQHESLNPPLVKKKRNLPGNPDPE. Over residues 9–21 the composition is skewed to low complexity; the sequence is SSSGGYVQSSSTT. Over residues 22–33 the composition is skewed to basic and acidic residues; that stretch reads DHVDHHHHDQHE. Serine 60 bears the Phosphoserine mark. 2 C2H2-type zinc fingers span residues 70 to 92 and 111 to 141; these read FLCEICGKGFQRDQNLQLHRRGH and YVCPEKSCVHHHPTRALGDLTGIKKHFCRKH. The Nuclear localization signal signature appears at 133 to 140; sequence IKKHFCRK. The C2H2-type 2; degenerate zinc finger occupies 146 to 169; sequence WKCEKCAKRYAVQSDWKAHSKTCG. 8 residues coordinate Zn(2+): cysteine 148, cysteine 151, histidine 164, cysteine 168, cysteine 175, cysteine 177, histidine 190, and cysteine 194. The CCHC-type 2; atypical zinc-finger motif lies at 173-196; sequence YRCDCGTIFSRRDSFITHRAFCDA. Positions 183 to 195 are SHR-binding; it reads RRDSFITHRAFCD.

In terms of assembly, interacts with SHR, SCR and JKD, but not with itself. Interacts with SIEL. Binds to RGA and SCL3 competitively in the nucleus. As to expression, expressed in the ground tissue and stele cells of embryos and 2-days post-germination roots but not in the quiescent center. Detected only in cells that perform asymmetric cell divisions. In roots, present in cortex, endodermis, and pericycle layer.

Its subcellular location is the nucleus. In terms of biological role, transcription factor that regulates tissue boundaries and asymmetric cell division. Contributes to the sequestration of 'SHORT-ROOT' to the nucleus. Interacts with the SCR and MGP promoters. Does not show transcription activity by itself, but regulates the transcription of downstream genes through interaction with other transcription factors. Binds DNA via its zinc fingers. Recognizes and binds to SCL3 promoter sequence 5'-AGACAA-3' to promote its expression when in complex with RGA. Positively involved in gibberellic acid (GA) signaling. This chain is Zinc finger protein MAGPIE, found in Arabidopsis thaliana (Mouse-ear cress).